The chain runs to 120 residues: Large ribosomal subunit protein uL14 (120 aa).

Belongs to the universal ribosomal protein uL14 family. As to quaternary structure, part of the 50S ribosomal subunit. Forms a cluster with proteins L3 and L19. In the 70S ribosome, L14 and L19 interact and together make contacts with the 16S rRNA in bridges B5 and B8.

Its function is as follows. Binds to 23S rRNA. Forms part of two intersubunit bridges in the 70S ribosome. The protein is Large ribosomal subunit protein uL14 of Karelsulcia muelleri (strain GWSS) (Sulcia muelleri).